The chain runs to 384 residues: MAFKKDKPVYIVDTTLRDGEQTAGVVFANNEKIRIAQMLDEIGIDQLEVGIPTMGGDEKETVAKIAKLGLKASIMAWNRAVVKDVQESLECGVDAVAISISTSDIHIEHKLKKTRQWVLDSMTEAVRFAKKEGVYVSVNAEDASRTDMNFLIEFARCAKQAGADRLRFCDTVGFLDPFKTYEMVKAIKDAVDIEIEMHTHNDFGMATANALAGVKAGAKFVGVTVNGLGERAGNAALEEVVMALKYVYKMDLGIDTSRFREISEYVALASGRPLPPSKAIVGKNVFAHESGIHVDGALKNPYTYEVFDPQEVGLERQIVIGKHSGTAALINKFKEYGRVLTEEEANLLLPHVRKMAIQLKRPLFDKELMYLYEDVIVKGKAKAI.

Residues 9–260 (VYIVDTTLRD…DLGIDTSRFR (252 aa)) form the Pyruvate carboxyltransferase domain. Asp18, His198, His200, and Asn234 together coordinate Mn(2+).

It belongs to the alpha-IPM synthase/homocitrate synthase family. LeuA type 1 subfamily. As to quaternary structure, homodimer. It depends on Mn(2+) as a cofactor.

Its subcellular location is the cytoplasm. It catalyses the reaction 3-methyl-2-oxobutanoate + acetyl-CoA + H2O = (2S)-2-isopropylmalate + CoA + H(+). The protein operates within amino-acid biosynthesis; L-leucine biosynthesis; L-leucine from 3-methyl-2-oxobutanoate: step 1/4. Its function is as follows. Catalyzes the condensation of the acetyl group of acetyl-CoA with 3-methyl-2-oxobutanoate (2-ketoisovalerate) to form 3-carboxy-3-hydroxy-4-methylpentanoate (2-isopropylmalate). In Caldanaerobacter subterraneus subsp. tengcongensis (strain DSM 15242 / JCM 11007 / NBRC 100824 / MB4) (Thermoanaerobacter tengcongensis), this protein is 2-isopropylmalate synthase 2.